A 249-amino-acid chain; its full sequence is Quinate/shikimate dehydrogenase (249 aa).

Residues Lys-32 and Asp-68 each coordinate substrate. Residues 93 to 96, 116 to 119, Lys-166, 193 to 196, and Gly-216 each bind NAD(+); these read AGGA, NRRD, and CVYN.

This sequence belongs to the shikimate dehydrogenase family. Homodimer.

It carries out the reaction L-quinate + NAD(+) = 3-dehydroquinate + NADH + H(+). The catalysed reaction is L-quinate + NADP(+) = 3-dehydroquinate + NADPH + H(+). It catalyses the reaction shikimate + NADP(+) = 3-dehydroshikimate + NADPH + H(+). The enzyme catalyses shikimate + NAD(+) = 3-dehydroshikimate + NADH + H(+). It participates in metabolic intermediate biosynthesis; chorismate biosynthesis; chorismate from D-erythrose 4-phosphate and phosphoenolpyruvate: step 4/7. The actual biological function of YdiB remains unclear, nor is it known whether 3-dehydroshikimate or quinate represents the natural substrate. Catalyzes the reversible NAD-dependent reduction of both 3-dehydroshikimate (DHSA) and 3-dehydroquinate to yield shikimate (SA) and quinate, respectively. It can use both NAD or NADP for catalysis, however it has higher catalytic efficiency with NAD. This chain is Quinate/shikimate dehydrogenase, found in Shigella flexneri serotype 5b (strain 8401).